A 195-amino-acid polypeptide reads, in one-letter code: Myelin-associated neurite-outgrowth inhibitor (195 aa).

M1 is modified (N-acetylmethionine). Residues 1–18 lie on the Cytoplasmic side of the membrane; sequence MNPVYSPGSSGVPYANAK. The residue at position 6 (S6) is a Phosphoserine. The helical transmembrane segment at 19-42 threads the bilayer; that stretch reads GIGYPAGFPMGYAAAAPAYSPNMY. Residues 43-142 are Extracellular-facing; the sequence is PGANPTFQTG…PAPIPPPRGN (100 aa). N46 carries an N-linked (GlcNAc...) asparagine glycan. A helical membrane pass occupies residues 143–164; the sequence is GVTMGMVAGTTMAMSAGTLLTA. Residues 165–195 lie on the Cytoplasmic side of the membrane; sequence HSPTPVAPHPVTVPTYRAPGTPTYSYVPPQW.

This sequence belongs to the FAM168 family. In terms of assembly, may form homodimers. May interact with DAZAP2, FAM168A, PRDX6, RBM6, TMTC1 and YPEL2. Interacts with CDC27. In terms of processing, N-glycosylated. Expressed in the brain, within neuronal axonal fibers and associated with myelin sheets (at protein level). Expression tends to be lower in the brain of Alzheimer disease patients compared to healthy individuals (at protein level).

The protein resides in the cytoplasm. It localises to the perinuclear region. Its subcellular location is the cell membrane. The protein localises to the cell projection. It is found in the axon. Functionally, inhibitor of neuronal axonal outgrowth. Acts as a negative regulator of CDC42 and STAT3 and a positive regulator of STMN2. Positive regulator of CDC27. In Homo sapiens (Human), this protein is Myelin-associated neurite-outgrowth inhibitor (FAM168B).